Consider the following 374-residue polypeptide: Muconate cycloisomerase 1 (374 aa).

Belongs to the cycloisomerase 2 family. Homotetramer.

It carries out the reaction (S)-muconolactone = cis,cis-muconate + H(+). Its pathway is aromatic compound metabolism; beta-ketoadipate pathway; 5-oxo-4,5-dihydro-2-furylacetate from catechol: step 2/3. Its function is as follows. Catalyzes a syn cycloisomerization. This Cutaneotrichosporon cutaneum (Yeast) protein is Muconate cycloisomerase 1.